The sequence spans 209 residues: Thymidine kinase (209 aa).

Residues 9 to 16 (AAMNAGKS) and 88 to 91 (DEAQ) each bind ATP. The active-site Proton acceptor is the E89. Positions 146, 148, 183, and 186 each coordinate Zn(2+).

Belongs to the thymidine kinase family. In terms of assembly, homotetramer.

The protein localises to the cytoplasm. It catalyses the reaction thymidine + ATP = dTMP + ADP + H(+). The polypeptide is Thymidine kinase (Legionella pneumophila (strain Lens)).